The sequence spans 275 residues: 4-hydroxy-3-methylbut-2-enyl diphosphate reductase (275 aa).

Residue cysteine 12 participates in [4Fe-4S] cluster binding. (2E)-4-hydroxy-3-methylbut-2-enyl diphosphate is bound by residues histidine 36 and histidine 70. 2 residues coordinate dimethylallyl diphosphate: histidine 36 and histidine 70. Residues histidine 36 and histidine 70 each coordinate isopentenyl diphosphate. Residue cysteine 92 coordinates [4Fe-4S] cluster. (2E)-4-hydroxy-3-methylbut-2-enyl diphosphate is bound at residue histidine 120. Histidine 120 provides a ligand contact to dimethylallyl diphosphate. An isopentenyl diphosphate-binding site is contributed by histidine 120. Glutamate 122 serves as the catalytic Proton donor. Threonine 157 contacts (2E)-4-hydroxy-3-methylbut-2-enyl diphosphate. Cysteine 185 contacts [4Fe-4S] cluster. The (2E)-4-hydroxy-3-methylbut-2-enyl diphosphate site is built by serine 213, serine 214, asparagine 215, and serine 257. 4 residues coordinate dimethylallyl diphosphate: serine 213, serine 214, asparagine 215, and serine 257. Serine 213, serine 214, asparagine 215, and serine 257 together coordinate isopentenyl diphosphate.

Belongs to the IspH family. [4Fe-4S] cluster serves as cofactor.

It catalyses the reaction isopentenyl diphosphate + 2 oxidized [2Fe-2S]-[ferredoxin] + H2O = (2E)-4-hydroxy-3-methylbut-2-enyl diphosphate + 2 reduced [2Fe-2S]-[ferredoxin] + 2 H(+). The catalysed reaction is dimethylallyl diphosphate + 2 oxidized [2Fe-2S]-[ferredoxin] + H2O = (2E)-4-hydroxy-3-methylbut-2-enyl diphosphate + 2 reduced [2Fe-2S]-[ferredoxin] + 2 H(+). The protein operates within isoprenoid biosynthesis; dimethylallyl diphosphate biosynthesis; dimethylallyl diphosphate from (2E)-4-hydroxy-3-methylbutenyl diphosphate: step 1/1. It functions in the pathway isoprenoid biosynthesis; isopentenyl diphosphate biosynthesis via DXP pathway; isopentenyl diphosphate from 1-deoxy-D-xylulose 5-phosphate: step 6/6. Catalyzes the conversion of 1-hydroxy-2-methyl-2-(E)-butenyl 4-diphosphate (HMBPP) into a mixture of isopentenyl diphosphate (IPP) and dimethylallyl diphosphate (DMAPP). Acts in the terminal step of the DOXP/MEP pathway for isoprenoid precursor biosynthesis. The sequence is that of 4-hydroxy-3-methylbut-2-enyl diphosphate reductase from Nitratiruptor sp. (strain SB155-2).